Here is a 1752-residue protein sequence, read N- to C-terminus: DNA-directed RNA polymerase II subunit rpb1 (1752 aa).

The Zn(2+) site is built by Cys69, Cys72, Cys79, His82, Cys109, Cys112, Cys150, and Cys175. Asp487, Asp489, and Asp491 together coordinate Mg(2+). The bridging helix stretch occupies residues 816-828; the sequence is PQEFFFHAMAGRE. Lys1252 is covalently cross-linked (Glycyl lysine isopeptide (Lys-Gly) (interchain with G-Cter in ubiquitin)). Residues Ser1489, Ser1499, Ser1506, and Ser1529 each carry the phosphoserine modification. Tyr1531 carries the post-translational modification Phosphotyrosine. A disordered region spans residues 1554-1752; the sequence is TSPSYSPSSP…SPSYSPTSPS (199 aa). Tandem repeats lie at residues 1558–1564, 1578–1584, 1585–1591, 1592–1598, and 1599–1605. The tract at residues 1558–1752 is C-terminal domain (CTD); 26 X 7 AA approximate tandem repeats of Y-S-P-[TS]-S-P-S; sequence YSPSSPGYST…SPSYSPTSPS (195 aa). One copy of the 6; approximate repeat lies at 1606-1612; sequence YSATSPS. A run of 20 repeats spans residues 1613 to 1619, 1620 to 1626, 1627 to 1633, 1634 to 1640, 1641 to 1647, 1648 to 1654, 1655 to 1661, 1662 to 1668, 1669 to 1675, 1676 to 1682, 1683 to 1689, 1690 to 1696, 1697 to 1703, 1704 to 1710, 1711 to 1717, 1718 to 1724, 1725 to 1731, 1732 to 1738, 1739 to 1745, and 1746 to 1752.

It belongs to the RNA polymerase beta' chain family. As to quaternary structure, component of the RNA polymerase II (Pol II) complex consisting of 12 subunits. Post-translationally, the tandem 7 residues repeats in the C-terminal domain (CTD) can be highly phosphorylated. The phosphorylation activates Pol II. Phosphorylation occurs mainly at residues 'Ser-2' and 'Ser-5' of the heptapeptide repeat. The phosphorylation state is believed to result from the balanced action of site-specific CTD kinases and phosphatase, and a 'CTD code' that specifies the position of Pol II within the transcription cycle has been proposed. Following transcription stress, the elongating form of RNA polymerase II (RNA pol IIo) is polyubiquitinated via 'Lys-63'-linkages on Lys-1252 at DNA damage sites without leading to degradation: ubiquitination promotes RNA pol IIo backtracking to allow access by the transcription-coupled nucleotide excision repair (TC-NER) machinery. Subsequent def1-dependent polyubiquitination by the elongin complex via 'Lys-48'-linkages may lead to proteasome-mediated degradation; presumably at stalled RNA pol II where TC-NER has failed, to halt global transcription and enable 'last resort' DNA repair pathways.

It is found in the nucleus. The enzyme catalyses RNA(n) + a ribonucleoside 5'-triphosphate = RNA(n+1) + diphosphate. Functionally, DNA-dependent RNA polymerase catalyzes the transcription of DNA into RNA using the four ribonucleoside triphosphates as substrates. Largest and catalytic component of RNA polymerase II which synthesizes mRNA precursors and many functional non-coding RNAs. Forms the polymerase active center together with the second largest subunit. Pol II is the central component of the basal RNA polymerase II transcription machinery. It is composed of mobile elements that move relative to each other. RPB1 is part of the core element with the central large cleft, the clamp element that moves to open and close the cleft and the jaws that are thought to grab the incoming DNA template. At the start of transcription, a single-stranded DNA template strand of the promoter is positioned within the central active site cleft of Pol II. A bridging helix emanates from RPB1 and crosses the cleft near the catalytic site and is thought to promote translocation of Pol II by acting as a ratchet that moves the RNA-DNA hybrid through the active site by switching from straight to bent conformations at each step of nucleotide addition. During transcription elongation, Pol II moves on the template as the transcript elongates. Elongation is influenced by the phosphorylation status of the C-terminal domain (CTD) of Pol II largest subunit (RPB1), which serves as a platform for assembly of factors that regulate transcription initiation, elongation, termination and mRNA processing. The sequence is that of DNA-directed RNA polymerase II subunit rpb1 (rpb1) from Schizosaccharomyces pombe (strain 972 / ATCC 24843) (Fission yeast).